The primary structure comprises 375 residues: Queuine tRNA-ribosyltransferase (375 aa).

The active-site Proton acceptor is the aspartate 94. Residues 94 to 98, aspartate 148, glutamine 191, and glycine 218 contribute to the substrate site; that span reads DSGGF. An RNA binding region spans residues 249-255; the sequence is GVGSPDD. Residue aspartate 268 is the Nucleophile of the active site. The RNA binding; important for wobble base 34 recognition stretch occupies residues 273–277; it reads TRIAR. Residues cysteine 306, cysteine 308, cysteine 311, and histidine 337 each coordinate Zn(2+).

The protein belongs to the queuine tRNA-ribosyltransferase family. In terms of assembly, homodimer. Within each dimer, one monomer is responsible for RNA recognition and catalysis, while the other monomer binds to the replacement base PreQ1. Zn(2+) serves as cofactor.

It catalyses the reaction 7-aminomethyl-7-carbaguanine + guanosine(34) in tRNA = 7-aminomethyl-7-carbaguanosine(34) in tRNA + guanine. The protein operates within tRNA modification; tRNA-queuosine biosynthesis. Functionally, catalyzes the base-exchange of a guanine (G) residue with the queuine precursor 7-aminomethyl-7-deazaguanine (PreQ1) at position 34 (anticodon wobble position) in tRNAs with GU(N) anticodons (tRNA-Asp, -Asn, -His and -Tyr). Catalysis occurs through a double-displacement mechanism. The nucleophile active site attacks the C1' of nucleotide 34 to detach the guanine base from the RNA, forming a covalent enzyme-RNA intermediate. The proton acceptor active site deprotonates the incoming PreQ1, allowing a nucleophilic attack on the C1' of the ribose to form the product. After dissociation, two additional enzymatic reactions on the tRNA convert PreQ1 to queuine (Q), resulting in the hypermodified nucleoside queuosine (7-(((4,5-cis-dihydroxy-2-cyclopenten-1-yl)amino)methyl)-7-deazaguanosine). This is Queuine tRNA-ribosyltransferase from Thermoanaerobacter pseudethanolicus (strain ATCC 33223 / 39E) (Clostridium thermohydrosulfuricum).